A 221-amino-acid polypeptide reads, in one-letter code: Ras-related protein Rab-28 (221 aa).

Ser-2 is subject to N-acetylserine. At Ser-8 the chain carries Phosphoserine. Gly-21, Gly-24, Lys-25, Thr-26, Ser-27, Gly-38, Lys-39, Tyr-41, and Thr-44 together coordinate GTP. A Mg(2+)-binding site is contributed by Thr-26. Positions 35 to 49 (ETFGKQYKQTIGLDF) are switch I. Mg(2+)-binding residues include Thr-44 and Asp-68. A switch II region spans residues 68 to 85 (DIGGQTIGGKMLDKYIYG). The GTP site is built by Gly-71, Asn-129, Lys-130, Asp-132, Ala-160, and Lys-161. Position 218 is a cysteine methyl ester (Cys-218). Cys-218 carries S-farnesyl cysteine lipidation. The propeptide at 219-221 (AVQ) is removed in mature form.

This sequence belongs to the small GTPase superfamily. Rab family. In terms of assembly, interacts (prenylated form) with PDE6D; the interaction promotes RAB28 delivery to the photoreceptor outer segments. Interacts with KCNJ13; the interaction may facilitate cone outer segments phagocytosis. Interacts with RELA; the interaction contributes to RELA transport from cytoplasm to nucleus. Mg(2+) serves as cofactor. In terms of processing, isoprenylated.

The protein localises to the cell membrane. It is found in the cytoplasm. It localises to the cytoskeleton. The protein resides in the cilium basal body. Its subcellular location is the nucleus. The catalysed reaction is GTP + H2O = GDP + phosphate + H(+). Its activity is regulated as follows. Regulated by guanine nucleotide exchange factors (GEFs) which promote the exchange of bound GDP for free GTP. Regulated by GTPase activating proteins (GAPs) which increase the GTP hydrolysis activity. Inhibited by GDP dissociation inhibitors (GDIs). Its function is as follows. The small GTPases Rab are key regulators of intracellular membrane trafficking, from the formation of transport vesicles to their fusion with membranes. Rabs cycle between an inactive GDP-bound form and an active GTP-bound form that is able to recruit to membranes different sets of downstream effectors directly responsible for vesicle formation, movement, tethering and fusion. RAB28 is required for shedding and phagocytosis of cone cell outer segments (OS) discs in the retina. Also participates in nuclear factor kappa-B p65/RELA nuclear transport in endothelial cells. This Bos taurus (Bovine) protein is Ras-related protein Rab-28 (RAB28).